Here is a 1174-residue protein sequence, read N- to C-terminus: MSPITREERLERRIQDLYANDPQFAAAKPATAITAAIERPGLPLPQIIETVMTGYADRPALAQRSVEFVTDAGTGHTTLRLLPHFETISYGELWDRISALADVLSTEQTVKPGDRVCLLGFNSVDYATIDMTLARLGAVAVPLQTSAAITQLQPIVAETQPTMIAASVDALADATELALSGQTATRVLVFDHHRQVDAHRAAVESARERLAGSAVVETLAEAIARGDVPRGASAGSAPGTDVSDDSLALLIYTSGSTGAPKGAMYPRRNVATFWRKRTWFEGGYEPSITLNFMPMSHVMGRQILYGTLCNGGTAYFVAKSDLSTLFEDLALVRPTELTFVPRVWDMVFDEFQSEVDRRLVDGADRVALEAQVKAEIRNDVLGGRYTSALTGSAPISDEMKAWVEELLDMHLVEGYGSTEAGMILIDGAIRRPAVLDYKLVDVPDLGYFLTDRPHPRGELLVKTDSLFPGYYQRAEVTADVFDADGFYRTGDIMAEVGPEQFVYLDRRNNVLKLSQGEFVTVSKLEAVFGDSPLVRQIYIYGNSARAYLLAVIVPTQEALDAVPVEELKARLGDSLQEVAKAAGLQSYEIPRDFIIETTPWTLENGLLTGIRKLARPQLKKHYGELLEQIYTDLAHGQADELRSLRQSGADAPVLVTVCRAAAALLGGSASDVQPDAHFTDLGGDSLSALSFTNLLHEIFDIEVPVGVIVSPANDLQALADYVEAARKPGSSRPTFASVHGASNGQVTEVHAGDLSLDKFIDAATLAEAPRLPAANTQVRTVLLTGATGFLGRYLALEWLERMDLVDGKLICLVRAKSDTEARARLDKTFDSGDPELLAHYRALAGDHLEVLAGDKGEADLGLDRQTWQRLADTVDLIVDPAALVNHVLPYSQLFGPNALGTAELLRLALTSKIKPYSYTSTIGVADQIPPSAFTEDADIRVISATRAVDDSYANGYSNSKWAGEVLLREAHDLCGLPVAVFRCDMILADTTWAGQLNVPDMFTRMILSLAATGIAPGSFYELAADGARQRAHYDGLPVEFIAEAISTLGAQSQDGFHTYHVMNPYDDGIGLDEFVDWLNESGCPIQRIADYGDWLQRFETALRALPDRQRHSSLLPLLHNYRQPERPVRGSIAPTDRFRAAVQEAKIGPDKDIPHVGAPIIVKYVSDLRLLGLL.

AMP-binding positions include His-297, Ser-392, 413 to 414 (EG), Thr-418, Asp-491, 503 to 506 (YLDR), Lys-512, and Lys-612. Positions 651–726 (APVLVTVCRA…ALADYVEAAR (76 aa)) constitute a Carrier domain. Ser-685 bears the O-(pantetheine 4'-phosphoryl)serine mark. NADP(+) is bound by residues 787–791 (TGFLG), Arg-814, Arg-824, 854–855 (DK), 880–882 (PAA), 919–920 (TS), Tyr-956, and Lys-960.

Belongs to the ATP-dependent AMP-binding enzyme family. Carboxylic acid reductase subfamily. Requires pantetheine 4'-phosphate as cofactor.

It carries out the reaction a carboxylate + ATP + NADPH + H(+) = an aldehyde + AMP + diphosphate + NADP(+). Its function is as follows. Catalyzes the ATP- and NADPH-dependent reduction of carboxylic acids to the corresponding aldehydes. Catalyzes the reduction of a wide range of aliphatic fatty acids (C6-C18) into their corresponding aldehydes. Can also reduce benzoate to benzaldehyde. Has a preference for NADPH over NADH as the electron donor. In Mycobacterium marinum (strain ATCC BAA-535 / M), this protein is Carboxylic acid reductase.